We begin with the raw amino-acid sequence, 264 residues long: MGPKRIPLVAGNWKMNFDHLEATYFVQQLAWNLRAIHFDYKRCEIALMPSFTSLRSVQVAVESDNLKIRYGAQAVSVTSQGAFTGDVSADMIAHLGCSYVIVGHSERRKYHPEDDANIVDQVRAVLAAGMQPILCVGESYEERRKGIELDFAVGQVHDVTRDLSDEEAAKLIVAYEPVWAIGTGMVATPQSAQDAARAIRNDLSDTFGTRVGETVRILYGGSVSSKNAVELINEPDVDGFLIGGSALKVDELTRICKLTLETTA.

12 to 14 (NWK) contacts substrate. His-104 (electrophile) is an active-site residue. Glu-176 (proton acceptor) is an active-site residue. Substrate-binding positions include Gly-182, Ser-222, and 243-244 (GG).

This sequence belongs to the triosephosphate isomerase family. Homodimer.

The protein resides in the cytoplasm. The catalysed reaction is D-glyceraldehyde 3-phosphate = dihydroxyacetone phosphate. It participates in carbohydrate biosynthesis; gluconeogenesis. Its pathway is carbohydrate degradation; glycolysis; D-glyceraldehyde 3-phosphate from glycerone phosphate: step 1/1. Its function is as follows. Involved in the gluconeogenesis. Catalyzes stereospecifically the conversion of dihydroxyacetone phosphate (DHAP) to D-glyceraldehyde-3-phosphate (G3P). This is Triosephosphate isomerase from Bifidobacterium adolescentis (strain ATCC 15703 / DSM 20083 / NCTC 11814 / E194a).